The chain runs to 146 residues: Hemoglobin subunit beta (146 aa).

The residue at position 1 (Val-1) is an N-acetylvaline. The region spanning 2–146 is the Globin domain; sequence HLTAEEKDAV…VANALAHRYH (145 aa). A Phosphoserine modification is found at Ser-44. Position 59 is an N6-acetyllysine (Lys-59). His-63 lines the heme b pocket. Lys-82 bears the N6-acetyllysine mark. His-92 contacts heme b. Cys-93 carries the S-nitrosocysteine modification.

This sequence belongs to the globin family. As to quaternary structure, heterotetramer of two alpha chains and two beta chains. In terms of tissue distribution, red blood cells.

Functionally, involved in oxygen transport from the lung to the various peripheral tissues. The polypeptide is Hemoglobin subunit beta (HBB) (Hippopotamus amphibius (Hippopotamus)).